A 181-amino-acid chain; its full sequence is Adenine phosphoribosyltransferase (181 aa).

It belongs to the purine/pyrimidine phosphoribosyltransferase family. In terms of assembly, homodimer.

The protein resides in the cytoplasm. The enzyme catalyses AMP + diphosphate = 5-phospho-alpha-D-ribose 1-diphosphate + adenine. It participates in purine metabolism; AMP biosynthesis via salvage pathway; AMP from adenine: step 1/1. Catalyzes a salvage reaction resulting in the formation of AMP, that is energically less costly than de novo synthesis. The chain is Adenine phosphoribosyltransferase from Shewanella woodyi (strain ATCC 51908 / MS32).